A 348-amino-acid polypeptide reads, in one-letter code: Phenylalanine--tRNA ligase alpha subunit (348 aa).

Glu-268 contacts Mg(2+).

The protein belongs to the class-II aminoacyl-tRNA synthetase family. Phe-tRNA synthetase alpha subunit type 1 subfamily. In terms of assembly, tetramer of two alpha and two beta subunits. Requires Mg(2+) as cofactor.

It localises to the cytoplasm. The catalysed reaction is tRNA(Phe) + L-phenylalanine + ATP = L-phenylalanyl-tRNA(Phe) + AMP + diphosphate + H(+). This Bordetella bronchiseptica (strain ATCC BAA-588 / NCTC 13252 / RB50) (Alcaligenes bronchisepticus) protein is Phenylalanine--tRNA ligase alpha subunit.